Consider the following 142-residue polypeptide: MEIWTVLEDFHKTRQLLENASNGVSHLWRFCFGGDLAKLVYRAKQDYREQFEDILRECPSLFDALNLGHQSHFNQRISRALDFTTPGRTTAAVAFFAFIFDKWSQETHFSRDYQLDFLAVALWRTWKCQRLNAIPATCRYSR.

The protein belongs to the adenoviridae E1B 19 kDa protein family.

It is found in the host cell membrane. It localises to the host nucleus envelope. The protein resides in the host nucleus lamina. Functionally, putative adenovirus Bcl-2 homolog that inhibits apoptosis induced by TNF or FAS pathways, as well as p53-mediated apoptosis. Without E1B 19K function, virus production is compromised because of premature death of host cell. Interacts with Bax protein in cell lysates. This is E1B protein, small T-antigen from Homo sapiens (Human).